Consider the following 431-residue polypeptide: 5-methylthioadenosine/S-adenosylhomocysteine deaminase (431 aa).

The Zn(2+) site is built by H60 and H62. Substrate-binding residues include E89 and H182. Residue H209 participates in Zn(2+) binding. Substrate contacts are provided by E212 and D297. D297 contacts Zn(2+).

This sequence belongs to the metallo-dependent hydrolases superfamily. MTA/SAH deaminase family. It depends on Zn(2+) as a cofactor.

It carries out the reaction S-adenosyl-L-homocysteine + H2O + H(+) = S-inosyl-L-homocysteine + NH4(+). It catalyses the reaction S-methyl-5'-thioadenosine + H2O + H(+) = S-methyl-5'-thioinosine + NH4(+). Catalyzes the deamination of 5-methylthioadenosine and S-adenosyl-L-homocysteine into 5-methylthioinosine and S-inosyl-L-homocysteine, respectively. Is also able to deaminate adenosine. The chain is 5-methylthioadenosine/S-adenosylhomocysteine deaminase from Natronomonas pharaonis (strain ATCC 35678 / DSM 2160 / CIP 103997 / JCM 8858 / NBRC 14720 / NCIMB 2260 / Gabara) (Halobacterium pharaonis).